The primary structure comprises 224 residues: Deoxyribose-phosphate aldolase (224 aa).

Asp-94 acts as the Proton donor/acceptor in catalysis. Lys-158 (schiff-base intermediate with acetaldehyde) is an active-site residue. The Proton donor/acceptor role is filled by Lys-187.

This sequence belongs to the DeoC/FbaB aldolase family. DeoC type 1 subfamily. Homodimer.

Its subcellular location is the cytoplasm. It catalyses the reaction 2-deoxy-D-ribose 5-phosphate = D-glyceraldehyde 3-phosphate + acetaldehyde. Activated by citrate. Inhibited by NaBH(4). Activity is independent of divalent metal cations. Catalyzes a reversible aldol reaction between acetaldehyde and D-glyceraldehyde 3-phosphate to generate 2-deoxy-D-ribose 5-phosphate. Could be involved in pentose biosynthesis. In Thermococcus kodakarensis (strain ATCC BAA-918 / JCM 12380 / KOD1) (Pyrococcus kodakaraensis (strain KOD1)), this protein is Deoxyribose-phosphate aldolase.